We begin with the raw amino-acid sequence, 606 residues long: Isocitrate dehydrogenase kinase/phosphatase (606 aa).

ATP is bound by residues 354–360 and lysine 375; that span reads APGFKGT. Residue aspartate 414 is part of the active site.

It belongs to the AceK family.

The protein resides in the cytoplasm. It catalyses the reaction L-seryl-[isocitrate dehydrogenase] + ATP = O-phospho-L-seryl-[isocitrate dehydrogenase] + ADP + H(+). Functionally, bifunctional enzyme which can phosphorylate or dephosphorylate isocitrate dehydrogenase (IDH) on a specific serine residue. This is a regulatory mechanism which enables bacteria to bypass the Krebs cycle via the glyoxylate shunt in response to the source of carbon. When bacteria are grown on glucose, IDH is fully active and unphosphorylated, but when grown on acetate or ethanol, the activity of IDH declines drastically concomitant with its phosphorylation. The chain is Isocitrate dehydrogenase kinase/phosphatase from Rhodopseudomonas palustris (strain BisB5).